The chain runs to 87 residues: Defensin-like protein 175 (87 aa).

Residues 1-23 form the signal peptide; sequence MAKATSSLVVPIIFLVIFALVEQ. 4 disulfides stabilise this stretch: C27–C66, C36–C55, C39–C60, and C43–C62.

It belongs to the DEFL family.

Its subcellular location is the secreted. The chain is Defensin-like protein 175 from Arabidopsis thaliana (Mouse-ear cress).